Consider the following 233-residue polypeptide: tRNA pseudouridine synthase B (233 aa).

Catalysis depends on Asp48, which acts as the Nucleophile.

The protein belongs to the pseudouridine synthase TruB family. Type 1 subfamily.

The enzyme catalyses uridine(55) in tRNA = pseudouridine(55) in tRNA. In terms of biological role, responsible for synthesis of pseudouridine from uracil-55 in the psi GC loop of transfer RNAs. The sequence is that of tRNA pseudouridine synthase B from Bacteroides fragilis (strain ATCC 25285 / DSM 2151 / CCUG 4856 / JCM 11019 / LMG 10263 / NCTC 9343 / Onslow / VPI 2553 / EN-2).